The primary structure comprises 506 residues: MADVGATGAEIRATRIEKAKTLQAQGMSPYAYRWERTHTAALLQDKYAHLAAGEAVGDRVSVAGRIMARRIFGKLAFFTLQDDSGTIQLYLDKQTISQTMGEAAFADLKHLTDVGDILGAVGTLKRTEKGELSVVVESYTMLTKSLLPLPDKWHGLTDVEKRYRQRYVDLIVNPQVRDTFRKRALITAAIRRYLNEQGFIEIETPVLQVEAGGAEARPFITYHNTLEMQLYLRIATELHLKRLIVGGFEKVYELGRIFRNEGISTKHNPEFTSIEVYQAYADYNDMMTLTEAIITTGAMEVLGTLKITYQGETIDLTPPWRRVTMHDAVLAATGIDFRQLGDLTAAKIAAQKVGVKDLDTCDTIGRVLNEVFEQIVEPTLIQPTFVLDYPVEISPLAKPHRSQPGLVERFELFIVGREHANSFSELTDPLDQRQRLEEQARRKAAGDLAAHSVDEDFLTALEHGMPPTGGLGIGIDRLVMLLTDSPSIRDVIAFPLLRPESAGGQV.

Positions 411 and 418 each coordinate Mg(2+).

It belongs to the class-II aminoacyl-tRNA synthetase family. Homodimer. Requires Mg(2+) as cofactor.

The protein localises to the cytoplasm. It catalyses the reaction tRNA(Lys) + L-lysine + ATP = L-lysyl-tRNA(Lys) + AMP + diphosphate. The polypeptide is Lysine--tRNA ligase (Thermosynechococcus vestitus (strain NIES-2133 / IAM M-273 / BP-1)).